The following is a 296-amino-acid chain: Partitioning protein REP2 (296 aa).

Met1 is modified (N-acetylmethionine). The tract at residues 1–57 (MDDIETAKNLTVKARTAYSVWDVCRLFIEMIAPDVDIDIESKRKSDELLFPGYVIRP) is interaction with REP1. The DNA-binding, and self-association stretch occupies residues 58-296 (MESLTTGRPY…GRKSRNTSRV (239 aa)). A disordered region spans residues 228–296 (SELEGRTEVN…GRKSRNTSRV (69 aa)). The span at 275-296 (PTKKRRVATRVRGRKSRNTSRV) shows a compositional bias: basic residues. A nuclear localization region spans residues 276–296 (TKKRRVATRVRGRKSRNTSRV).

As to quaternary structure, interacts with REP1.

Its subcellular location is the nucleus. In terms of biological role, part of the plasmid partitioning system, which ensures the equal distribution of replicated plasmid molecules to daughter cells. The plasmids exist as well-organized plasmid foci within the nucleus that stay together throughout the cell-cycle and act as entity during segregation, effetively reducing copy number to one. Plasmid partitioning requires the proteins REP1, REP2, and a cis-acting locus STB (REP3). REP1-REP2 stably associate with CSE4-containing chromatin at STB during S-phase, marking the locus with a centromeric tag, and thereby probably catching mitotic spindle microtubules to the plasmid cluster and coupling plasmid segregation to chromosome segregation. REP1-REP2 are required to recruit the cohesin complex to the STB locus for pairing of the replicated plasmid cluster, a prerequisite for successful plasmid segregation. REP1-REP2 also negatively regulate expression of site-specific recombinase FLP and of RAF1. This is Partitioning protein REP2 (REP2) from Saccharomyces cerevisiae (strain ATCC 204508 / S288c) (Baker's yeast).